Here is a 568-residue protein sequence, read N- to C-terminus: Periplasmic trehalase (568 aa).

Residues 1–39 form the signal peptide; the sequence is MPHVVARSGDVMSSAAPPSCTSLLGLSLSMFVAPCTLTA. Substrate contacts are provided by residues Arg169, 176-177, Asn213, 222-224, 294-296, and Gly327; these read WD, RSQ, and RPE. Catalysis depends on proton donor/acceptor residues Asp329 and Glu511. Position 526 (Glu526) interacts with substrate.

The protein belongs to the glycosyl hydrolase 37 family.

It localises to the periplasm. It carries out the reaction alpha,alpha-trehalose + H2O = alpha-D-glucose + beta-D-glucose. Its function is as follows. Provides the cells with the ability to utilize trehalose at high osmolarity by splitting it into glucose molecules that can subsequently be taken up by the phosphotransferase-mediated uptake system. The protein is Periplasmic trehalase of Xanthomonas oryzae pv. oryzae (strain MAFF 311018).